The sequence spans 434 residues: D-amino acid dehydrogenase (434 aa).

Residue 3–17 (VLVLGSGVIGTTSAW) participates in FAD binding.

It belongs to the DadA oxidoreductase family. It depends on FAD as a cofactor.

The catalysed reaction is a D-alpha-amino acid + A + H2O = a 2-oxocarboxylate + AH2 + NH4(+). Its pathway is amino-acid degradation; D-alanine degradation; NH(3) and pyruvate from D-alanine: step 1/1. Functionally, oxidative deamination of D-amino acids. The sequence is that of D-amino acid dehydrogenase from Stenotrophomonas maltophilia (strain R551-3).